The following is a 336-amino-acid chain: Solute-binding protein Csal_2479 (336 aa).

The first 33 residues, 1-33 (MQTNKRLKMASCVKAAAMLGMLLSVSISTTAQA), serve as a signal peptide directing secretion. Beta-D-glucuronate-binding positions include His42, Gln80, Arg156, Arg177, Tyr200, 217–218 (NN), and Glu244.

Belongs to the bacterial solute-binding protein 7 family. The complex is comprised of an extracytoplasmic solute-binding protein and a heteromeric permease formed by two transmembrane proteins.

The protein localises to the periplasm. In terms of biological role, solute-binding protein that binds D-glucuronate (in vitro). Probably part of a tripartite ATP-independent periplasmic (TRAP) transport system that mediates solute transport into the cytoplasm. The protein is Solute-binding protein Csal_2479 of Chromohalobacter salexigens (strain ATCC BAA-138 / DSM 3043 / CIP 106854 / NCIMB 13768 / 1H11).